A 755-amino-acid chain; its full sequence is Diamine oxidase [copper-containing] (755 aa).

The signal sequence occupies residues 1–24; sequence MGRGTLALGWAGAALLLLQMLAAA. N-linked (GlcNAc...) asparagine glycosylation occurs at Asn115. Cys182 and Cys186 form a disulfide bridge. Asp376 acts as the Proton acceptor in catalysis. Cys394 and Cys420 form a disulfide bridge. Tyr464 serves as the catalytic Schiff-base intermediate with substrate; via topaquinone. The residue at position 464 (Tyr464) is a 2',4',5'-topaquinone. Cu(2+) contacts are provided by His513 and His515. Ca(2+) contacts are provided by Asp522, Leu523, and Asp524. The N-linked (GlcNAc...) asparagine glycan is linked to Asn541. Residues Glu565, Phe656, Asn659, Glu661, Asp667, and Leu668 each coordinate Ca(2+). His678 is a binding site for Cu(2+). N-linked (GlcNAc...) asparagine glycosylation is present at Asn749.

The protein belongs to the copper/topaquinone oxidase family. As to quaternary structure, homodimer; disulfide-linked. Cu(2+) serves as cofactor. It depends on Ca(2+) as a cofactor. The cofactor is L-topaquinone. Post-translationally, topaquinone (TPQ) is generated by copper-dependent autoxidation of a specific tyrosyl residue. In terms of processing, N-glycosylated; the glycans are primarily linear, di-, or tribranched fucosylated complex type.

The protein resides in the secreted. It localises to the extracellular space. The protein localises to the cell membrane. It carries out the reaction histamine + O2 + H2O = imidazole-4-acetaldehyde + H2O2 + NH4(+). It catalyses the reaction N(tau)-methylhistamine + O2 + H2O = 1-methylimidazole-4-acetaldehyde + H2O2 + NH4(+). The enzyme catalyses putrescine + O2 + H2O = 4-aminobutanal + H2O2 + NH4(+). The catalysed reaction is cadaverine + O2 + H2O = 5-aminopentanal + H2O2 + NH4(+). With respect to regulation, inhibited by amiloride and amiloride analogs. Functionally, catalyzes the oxidative deamination of primary amines to the corresponding aldehydes with the concomitant production of hydrogen peroxide and ammonia. Its preferred substrates in vitro are the diamines histamine and 1-methylhistamine and it could therefore play a role in allergic and immune responses. Has a broad specificity for diamines and can also act on cadaverine and putrescine, two products of amino acid catabolism. It could also act on polyamines, like spermidine and spermine though less efficiently, and regulate various biological processes. The sequence is that of Diamine oxidase [copper-containing] from Sus scrofa (Pig).